The primary structure comprises 161 residues: Carboxysome assembly protein CcmN (161 aa).

The interval 111 to 140 (LLSAETPPTTATVSSSEPAGRSPQSSAIAH) is disordered. Residues 116–137 (TPPTTATVSSSEPAGRSPQSSA) are compositionally biased toward polar residues. An Encapsulation peptide motif is present at residues 144 to 161 (VYGKEQFLRMRQSMFPDR).

The protein belongs to the CcmN family. As to quaternary structure, interacts with CcmM via the N-terminus of CcmN. Interacts with CcmK2 via the 18 C-terminal residues.

It is found in the carboxysome. Its function is as follows. Required for carboxysome formation; the N-terminus interacts with CcmM which itself binds RuBisCO (ribulose bisphosphate carboxylase, rbcL-rbcS), while the C-terminal 18 residues interact with carboxysome shell protein CcmK2. Required for growth in normal air. Functionally, beta-carboxysome assembly initiates when soluble RuBisCO is condensed into a liquid matrix in a pre-carboxysome by the RbcS-like domains of probably both CcmM58 and CcmM35. CcmN interacts with the N-terminus of CcmM58, and then recruits the CcmK2 major shell protein via CcmN's encapsulation peptide. Shell formation requires CcmK proteins and CcmO. CcmL caps the otherwise elongated carboxysome. Once fully encapsulated carboxysomes are formed, they migrate within the cell probably via interactions with the cytoskeleton. The chain is Carboxysome assembly protein CcmN from Synechococcus elongatus (strain ATCC 33912 / PCC 7942 / FACHB-805) (Anacystis nidulans R2).